The sequence spans 160 residues: SsrA-binding protein (160 aa).

Belongs to the SmpB family.

It is found in the cytoplasm. In terms of biological role, required for rescue of stalled ribosomes mediated by trans-translation. Binds to transfer-messenger RNA (tmRNA), required for stable association of tmRNA with ribosomes. tmRNA and SmpB together mimic tRNA shape, replacing the anticodon stem-loop with SmpB. tmRNA is encoded by the ssrA gene; the 2 termini fold to resemble tRNA(Ala) and it encodes a 'tag peptide', a short internal open reading frame. During trans-translation Ala-aminoacylated tmRNA acts like a tRNA, entering the A-site of stalled ribosomes, displacing the stalled mRNA. The ribosome then switches to translate the ORF on the tmRNA; the nascent peptide is terminated with the 'tag peptide' encoded by the tmRNA and targeted for degradation. The ribosome is freed to recommence translation, which seems to be the essential function of trans-translation. The polypeptide is SsrA-binding protein (Rhodospirillum rubrum (strain ATCC 11170 / ATH 1.1.1 / DSM 467 / LMG 4362 / NCIMB 8255 / S1)).